We begin with the raw amino-acid sequence, 429 residues long: Glutamate-1-semialdehyde 2,1-aminomutase (429 aa).

An N6-(pyridoxal phosphate)lysine modification is found at lysine 265.

This sequence belongs to the class-III pyridoxal-phosphate-dependent aminotransferase family. HemL subfamily. As to quaternary structure, homodimer. It depends on pyridoxal 5'-phosphate as a cofactor.

The protein localises to the cytoplasm. It catalyses the reaction (S)-4-amino-5-oxopentanoate = 5-aminolevulinate. It functions in the pathway porphyrin-containing compound metabolism; protoporphyrin-IX biosynthesis; 5-aminolevulinate from L-glutamyl-tRNA(Glu): step 2/2. The protein is Glutamate-1-semialdehyde 2,1-aminomutase of Azotobacter vinelandii (strain DJ / ATCC BAA-1303).